Here is an 87-residue protein sequence, read N- to C-terminus: Small ribosomal subunit protein bS20 (87 aa).

The disordered stretch occupies residues 1–22 (MANTSQARKRARQAGVRRVRNA). A compositionally biased stretch (basic residues) spans 7 to 20 (ARKRARQAGVRRVR).

Belongs to the bacterial ribosomal protein bS20 family.

Binds directly to 16S ribosomal RNA. This Nitrosococcus oceani (strain ATCC 19707 / BCRC 17464 / JCM 30415 / NCIMB 11848 / C-107) protein is Small ribosomal subunit protein bS20.